The primary structure comprises 237 residues: tRNA1(Val) (adenine(37)-N6)-methyltransferase (237 aa).

The protein belongs to the methyltransferase superfamily. tRNA (adenine-N(6)-)-methyltransferase family.

Its subcellular location is the cytoplasm. It carries out the reaction adenosine(37) in tRNA1(Val) + S-adenosyl-L-methionine = N(6)-methyladenosine(37) in tRNA1(Val) + S-adenosyl-L-homocysteine + H(+). In terms of biological role, specifically methylates the adenine in position 37 of tRNA(1)(Val) (anticodon cmo5UAC). The polypeptide is tRNA1(Val) (adenine(37)-N6)-methyltransferase (Bacteroides thetaiotaomicron (strain ATCC 29148 / DSM 2079 / JCM 5827 / CCUG 10774 / NCTC 10582 / VPI-5482 / E50)).